The chain runs to 412 residues: Probable tRNA pseudouridine synthase D (412 aa).

Asp97 (nucleophile) is an active-site residue. Positions 167 to 370 (ALPNYYGYQR…YGGYRKVVLT (204 aa)) constitute a TRUD domain.

It belongs to the pseudouridine synthase TruD family.

It carries out the reaction uridine(13) in tRNA = pseudouridine(13) in tRNA. In terms of biological role, could be responsible for synthesis of pseudouridine from uracil-13 in transfer RNAs. In Pyrobaculum islandicum (strain DSM 4184 / JCM 9189 / GEO3), this protein is Probable tRNA pseudouridine synthase D.